We begin with the raw amino-acid sequence, 325 residues long: MSPNPSSFGKVAVLMGGRSAEREISLMSGSGVVQALRSQGIDAHAFDPAERDLGELKTGGFARCFIALHGRFGEDGTVQGALELLGIPYTGSGVMASSMAIDKVMTKRLLLSESLPTPRYVLLRRGGYSPAQVDAIVDTLGLPLIVKPAREGSSLGLSKVTERAAMAAAVALAEKMDADILCEQFISGDEVTCPVLGTGEQARALPVIRIVAPEGNYDYQNKYFTDTTQYLVPCGLPAGEEAAIQQLVLQAFRTLNCRGWARADVMIDQATRKPYLLEINTSPGMTGHSLVPMSARAAGISYEALCVEVLKTALLDHQPRDGSLP.

Residues 107–311 (KRLLLSESLP…YEALCVEVLK (205 aa)) enclose the ATP-grasp domain. An ATP-binding site is contributed by 137–192 (VDTLGLPLIVKPAREGSSLGLSKVTERAAMAAAVALAEKMDADILCEQFISGDEVT). Mg(2+)-binding residues include aspartate 264, glutamate 278, and asparagine 280.

It belongs to the D-alanine--D-alanine ligase family. Mg(2+) is required as a cofactor. Requires Mn(2+) as cofactor.

It is found in the cytoplasm. The catalysed reaction is 2 D-alanine + ATP = D-alanyl-D-alanine + ADP + phosphate + H(+). It participates in cell wall biogenesis; peptidoglycan biosynthesis. In terms of biological role, cell wall formation. In Polaromonas naphthalenivorans (strain CJ2), this protein is D-alanine--D-alanine ligase.